A 167-amino-acid polypeptide reads, in one-letter code: Transcription factor 24 (167 aa).

Low complexity predominate over residues 1–23; that stretch reads MDRGRPAGSPLSASAEPAPLAAA. A disordered region spans residues 1-60; the sequence is MDRGRPAGSPLSASAEPAPLAAAIRDSRPGRTGPGPAGPGGGSRSGSGRPAAANAARERS. The span at 32–45 shows a compositional bias: gly residues; the sequence is TGPGPAGPGGGSRS. Over residues 46–55 the composition is skewed to low complexity; that stretch reads GSGRPAAANA. The bHLH domain maps to 49 to 101; it reads RPAAANAARERSRVQTLRHAFLELQRTLPSVPPDTKLSKLDVLLLATTYIAHL.

Efficient DNA binding requires dimerization with another bHLH protein.

It localises to the nucleus. Its function is as follows. Putative transcription factor. This chain is Transcription factor 24 (TCF24), found in Homo sapiens (Human).